The primary structure comprises 141 residues: Large ribosomal subunit protein uL11 (141 aa).

It belongs to the universal ribosomal protein uL11 family. As to quaternary structure, part of the ribosomal stalk of the 50S ribosomal subunit. Interacts with L10 and the large rRNA to form the base of the stalk. L10 forms an elongated spine to which L12 dimers bind in a sequential fashion forming a multimeric L10(L12)X complex. In terms of processing, one or more lysine residues are methylated.

Forms part of the ribosomal stalk which helps the ribosome interact with GTP-bound translation factors. This Clostridium perfringens (strain ATCC 13124 / DSM 756 / JCM 1290 / NCIMB 6125 / NCTC 8237 / Type A) protein is Large ribosomal subunit protein uL11.